A 355-amino-acid polypeptide reads, in one-letter code: tRNA-specific 2-thiouridylase MnmA (355 aa).

Residues 6–13 (LLSGGVDS) and leucine 33 contribute to the ATP site. Cysteine 100 (nucleophile) is an active-site residue. The cysteines at positions 100 and 195 are disulfide-linked. An ATP-binding site is contributed by glycine 123. The segment at 145–147 (KDQ) is interaction with tRNA. Cysteine 195 functions as the Cysteine persulfide intermediate in the catalytic mechanism.

Belongs to the MnmA/TRMU family.

Its subcellular location is the cytoplasm. The catalysed reaction is S-sulfanyl-L-cysteinyl-[protein] + uridine(34) in tRNA + AH2 + ATP = 2-thiouridine(34) in tRNA + L-cysteinyl-[protein] + A + AMP + diphosphate + H(+). Catalyzes the 2-thiolation of uridine at the wobble position (U34) of tRNA, leading to the formation of s(2)U34. This chain is tRNA-specific 2-thiouridylase MnmA, found in Borrelia garinii subsp. bavariensis (strain ATCC BAA-2496 / DSM 23469 / PBi) (Borreliella bavariensis).